The sequence spans 306 residues: Ornithine carbamoyltransferase (306 aa).

Residues 54 to 57 (STRT), Q81, R105, and 132 to 135 (HPLQ) each bind carbamoyl phosphate. L-ornithine-binding positions include N162, D226, and 230–231 (SM). Residues 266 to 267 (CL) and R294 contribute to the carbamoyl phosphate site.

The protein belongs to the aspartate/ornithine carbamoyltransferase superfamily. OTCase family.

It is found in the cytoplasm. It carries out the reaction carbamoyl phosphate + L-ornithine = L-citrulline + phosphate + H(+). It functions in the pathway amino-acid biosynthesis; L-arginine biosynthesis; L-arginine from L-ornithine and carbamoyl phosphate: step 1/3. Functionally, reversibly catalyzes the transfer of the carbamoyl group from carbamoyl phosphate (CP) to the N(epsilon) atom of ornithine (ORN) to produce L-citrulline. This Sulfurisphaera tokodaii (strain DSM 16993 / JCM 10545 / NBRC 100140 / 7) (Sulfolobus tokodaii) protein is Ornithine carbamoyltransferase.